A 590-amino-acid polypeptide reads, in one-letter code: MSQGIITKVSGPLVVAEGLPEAKMFDVVKVGNQGLIGEIIEIRGERVSIQVYEETSGLGPGDPVVSTGEPLSVELGPGMLEGIFDGIQRPLDVIEKKVGSFITRGIDVPSLNREKKWKFTPKVKSGDKVSGGDIIGTVQETVIVEHRIMVPPAISGIVEDIREGEYTVTEPIARIKTDSGQIVEITMMQKWPVRKARPYKEKLPPEIPMPTGQRVIDTLFPVTKGGTACIPGPFGSGKTVVQHQLAKWADAEIVVYIGCGERGNEMTDVLLEFPELKDPKTEEPLMKRTVLIANTSNMPVAAREASIYTGITIAEYFRDMGYSVALMADSTSRWAEALREMSGRLEEMPGEEGYPAYLARRLAEFYERAGRVICLGSDNREGALTVVGAVSPPGGDLSEPVTQATLRVVKVFWALDSELAYARHFPAINWLTSYSLYSDVVEDYMNKNVSSDWGELRSEAMRLLQEEASLQEIVRLVGIDVLSTRDRLVLEVARSIREDFLHQNAFHEVDTYSSMEKQYRMLKLIMIFYQEAQKALEKGVPFSEIEKHPVREKIARAKYVEESKLTVFDEIEKEIKKAMQGLIEGGAADA.

232 to 239 contributes to the ATP binding site; the sequence is GPFGSGKT.

Belongs to the ATPase alpha/beta chains family.

The enzyme catalyses ATP + H2O + 4 H(+)(in) = ADP + phosphate + 5 H(+)(out). Functionally, produces ATP from ADP in the presence of a proton gradient across the membrane. The V-type alpha chain is a catalytic subunit. This is V-type ATP synthase alpha chain from Thermoanaerobacter sp. (strain X514).